Here is a 155-residue protein sequence, read N- to C-terminus: Ribonuclease H (155 aa).

The RNase H type-1 domain maps to 1–142 (MLKQVEIFTD…CDELARAAAM (142 aa)). Mg(2+) is bound by residues D10, E48, D70, and D134.

It belongs to the RNase H family. In terms of assembly, monomer. Requires Mg(2+) as cofactor.

It localises to the cytoplasm. It carries out the reaction Endonucleolytic cleavage to 5'-phosphomonoester.. Functionally, endonuclease that specifically degrades the RNA of RNA-DNA hybrids. In Escherichia coli (strain 55989 / EAEC), this protein is Ribonuclease H.